The primary structure comprises 133 residues: ATP synthase epsilon chain (133 aa).

Belongs to the ATPase epsilon chain family. F-type ATPases have 2 components, CF(1) - the catalytic core - and CF(0) - the membrane proton channel. CF(1) has five subunits: alpha(3), beta(3), gamma(1), delta(1), epsilon(1). CF(0) has three main subunits: a, b and c.

It is found in the cell membrane. In terms of biological role, produces ATP from ADP in the presence of a proton gradient across the membrane. The sequence is that of ATP synthase epsilon chain from Clostridium perfringens (strain ATCC 13124 / DSM 756 / JCM 1290 / NCIMB 6125 / NCTC 8237 / Type A).